The sequence spans 358 residues: Methylthioribose-1-phosphate isomerase (358 aa).

Residues 54-56 (CGA) and Q205 contribute to the substrate site. Residue D246 is the Proton donor of the active site. 256–257 (NQ) is a substrate binding site.

The protein belongs to the eIF-2B alpha/beta/delta subunits family. MtnA subfamily.

It carries out the reaction 5-(methylsulfanyl)-alpha-D-ribose 1-phosphate = 5-(methylsulfanyl)-D-ribulose 1-phosphate. It participates in amino-acid biosynthesis; L-methionine biosynthesis via salvage pathway; L-methionine from S-methyl-5-thio-alpha-D-ribose 1-phosphate: step 1/6. Its function is as follows. Catalyzes the interconversion of methylthioribose-1-phosphate (MTR-1-P) into methylthioribulose-1-phosphate (MTRu-1-P). This Pseudomonas fluorescens (strain ATCC BAA-477 / NRRL B-23932 / Pf-5) protein is Methylthioribose-1-phosphate isomerase.